Reading from the N-terminus, the 80-residue chain is Exodeoxyribonuclease 7 small subunit (80 aa).

The protein belongs to the XseB family. Heterooligomer composed of large and small subunits.

It is found in the cytoplasm. It catalyses the reaction Exonucleolytic cleavage in either 5'- to 3'- or 3'- to 5'-direction to yield nucleoside 5'-phosphates.. Its function is as follows. Bidirectionally degrades single-stranded DNA into large acid-insoluble oligonucleotides, which are then degraded further into small acid-soluble oligonucleotides. In Salmonella paratyphi B (strain ATCC BAA-1250 / SPB7), this protein is Exodeoxyribonuclease 7 small subunit.